The chain runs to 156 residues: MNIIKANVAAPDARVAITIARFNQFINDSLLDGAVDALTRIGQVKDDNITVVWVPGAYELPLATEALAKSGKYDAVVALGTVIRGGTAHFEYVAGGASNGLASVAQDSGVPVAFGVLTTESIEQAIERAGTKAGNKGAEAALTALEMINVLKAIKA.

5-amino-6-(D-ribitylamino)uracil contacts are provided by residues phenylalanine 22, 57–59 (AYE), and 81–83 (TVI). 86–87 (GT) provides a ligand contact to (2S)-2-hydroxy-3-oxobutyl phosphate. Residue histidine 89 is the Proton donor of the active site. Residue phenylalanine 114 participates in 5-amino-6-(D-ribitylamino)uracil binding. Arginine 128 provides a ligand contact to (2S)-2-hydroxy-3-oxobutyl phosphate.

It belongs to the DMRL synthase family. Forms an icosahedral capsid composed of 60 subunits, arranged as a dodecamer of pentamers.

It carries out the reaction (2S)-2-hydroxy-3-oxobutyl phosphate + 5-amino-6-(D-ribitylamino)uracil = 6,7-dimethyl-8-(1-D-ribityl)lumazine + phosphate + 2 H2O + H(+). It functions in the pathway cofactor biosynthesis; riboflavin biosynthesis; riboflavin from 2-hydroxy-3-oxobutyl phosphate and 5-amino-6-(D-ribitylamino)uracil: step 1/2. Its function is as follows. Catalyzes the formation of 6,7-dimethyl-8-ribityllumazine by condensation of 5-amino-6-(D-ribitylamino)uracil with 3,4-dihydroxy-2-butanone 4-phosphate. This is the penultimate step in the biosynthesis of riboflavin. In Salmonella agona (strain SL483), this protein is 6,7-dimethyl-8-ribityllumazine synthase.